Consider the following 800-residue polypeptide: Protein PET111, mitochondrial (800 aa).

This sequence to yeast YHR160C.

It localises to the mitochondrion matrix. Required for translation of the mitochondrial gene for cytochrome c oxidase subunit II (COX2). The protein is Protein PET111, mitochondrial (PET111) of Saccharomyces cerevisiae (strain ATCC 204508 / S288c) (Baker's yeast).